We begin with the raw amino-acid sequence, 86 residues long: YcgL domain-containing protein XCC3997 (86 aa).

The YcgL domain maps to 1–83 (MHAYVYKSQR…PKTVVLAGEC (83 aa)).

This is YcgL domain-containing protein XCC3997 from Xanthomonas campestris pv. campestris (strain ATCC 33913 / DSM 3586 / NCPPB 528 / LMG 568 / P 25).